Consider the following 456-residue polypeptide: Putrescine--pyruvate aminotransferase (456 aa).

Substrate is bound at residue Tyr156. Residue Asp262 coordinates pyridoxal 5'-phosphate. Lys291 is subject to N6-(pyridoxal phosphate)lysine. Substrate is bound by residues Gly322 and Arg417.

This sequence belongs to the class-III pyridoxal-phosphate-dependent aminotransferase family. It depends on pyridoxal 5'-phosphate as a cofactor.

The enzyme catalyses putrescine + pyruvate = 4-aminobutanal + L-alanine. Its pathway is amine and polyamine degradation; putrescine degradation; 4-aminobutanal from putrescine (transaminase route). Functionally, involved in the putrescine catabolism. Catalyzes the transfer of the amino group from putrescine to pyruvate to yield 4-aminobutanal and alanine. In Pseudomonas aeruginosa (strain ATCC 15692 / DSM 22644 / CIP 104116 / JCM 14847 / LMG 12228 / 1C / PRS 101 / PAO1), this protein is Putrescine--pyruvate aminotransferase.